We begin with the raw amino-acid sequence, 291 residues long: Beta-lactamase CTX-M-1 (291 aa).

A signal peptide spans 1–28 (MVKKSLRQFTLMATATVTLLLGSVPLYA). S73 serves as the catalytic Nucleophile; acyl-ester intermediate. 4 residues coordinate a beta-lactam: K76, S133, E169, and S240. E169 (proton acceptor) is an active-site residue.

This sequence belongs to the class-A beta-lactamase family. As to quaternary structure, monomer.

The protein localises to the secreted. It catalyses the reaction a beta-lactam + H2O = a substituted beta-amino acid. With respect to regulation, inhibited by the beta-lactamase-blocking agent clavulanic acid; in the TG1 strain. Extended-spectrum beta-lactamase (ESBL) which confers resistance to penicillins, as well as first, second and third-generation cephalosporins. Has cefotaxime-hydrolyzing activity. Inactive against the cephamycin antibiotic, cefoxitin, or against the carbapenem, imipenem. The sequence is that of Beta-lactamase CTX-M-1 from Escherichia coli.